Here is a 282-residue protein sequence, read N- to C-terminus: ATP phosphoribosyltransferase (282 aa).

Belongs to the ATP phosphoribosyltransferase family. Long subfamily. The cofactor is Mg(2+).

It localises to the cytoplasm. The enzyme catalyses 1-(5-phospho-beta-D-ribosyl)-ATP + diphosphate = 5-phospho-alpha-D-ribose 1-diphosphate + ATP. It participates in amino-acid biosynthesis; L-histidine biosynthesis; L-histidine from 5-phospho-alpha-D-ribose 1-diphosphate: step 1/9. Feedback inhibited by histidine. Its function is as follows. Catalyzes the condensation of ATP and 5-phosphoribose 1-diphosphate to form N'-(5'-phosphoribosyl)-ATP (PR-ATP). Has a crucial role in the pathway because the rate of histidine biosynthesis seems to be controlled primarily by regulation of HisG enzymatic activity. In Saccharopolyspora erythraea (strain ATCC 11635 / DSM 40517 / JCM 4748 / NBRC 13426 / NCIMB 8594 / NRRL 2338), this protein is ATP phosphoribosyltransferase.